The chain runs to 204 residues: ATP-dependent Clp protease proteolytic subunit (204 aa).

Serine 101 functions as the Nucleophile in the catalytic mechanism. Histidine 126 is an active-site residue.

The protein belongs to the peptidase S14 family. Component of the chloroplastic Clp protease core complex.

Its subcellular location is the plastid. It localises to the chloroplast stroma. The enzyme catalyses Hydrolysis of proteins to small peptides in the presence of ATP and magnesium. alpha-casein is the usual test substrate. In the absence of ATP, only oligopeptides shorter than five residues are hydrolyzed (such as succinyl-Leu-Tyr-|-NHMec, and Leu-Tyr-Leu-|-Tyr-Trp, in which cleavage of the -Tyr-|-Leu- and -Tyr-|-Trp bonds also occurs).. Its function is as follows. Cleaves peptides in various proteins in a process that requires ATP hydrolysis. Has a chymotrypsin-like activity. Plays a major role in the degradation of misfolded proteins. This chain is ATP-dependent Clp protease proteolytic subunit, found in Anthoceros angustus (Hornwort).